A 497-amino-acid chain; its full sequence is Probable cytosol aminopeptidase (497 aa).

Lys267 and Asp272 together coordinate Mn(2+). Lys279 is a catalytic residue. Asp290, Asp349, and Glu351 together coordinate Mn(2+). Arg353 is a catalytic residue.

It belongs to the peptidase M17 family. Mn(2+) serves as cofactor.

It localises to the cytoplasm. It catalyses the reaction Release of an N-terminal amino acid, Xaa-|-Yaa-, in which Xaa is preferably Leu, but may be other amino acids including Pro although not Arg or Lys, and Yaa may be Pro. Amino acid amides and methyl esters are also readily hydrolyzed, but rates on arylamides are exceedingly low.. The enzyme catalyses Release of an N-terminal amino acid, preferentially leucine, but not glutamic or aspartic acids.. Its function is as follows. Presumably involved in the processing and regular turnover of intracellular proteins. Catalyzes the removal of unsubstituted N-terminal amino acids from various peptides. This is Probable cytosol aminopeptidase from Syntrophotalea carbinolica (strain DSM 2380 / NBRC 103641 / GraBd1) (Pelobacter carbinolicus).